A 275-amino-acid polypeptide reads, in one-letter code: MVRKIAIYGKGGIGKSTTQQNTAAAMSYFHGKNVMIHGCDPKADSTRLILGGKMQTTMMDTLRELGEVACTPDKVIETGFGGIKCVESGGPEPGVGCAGRGVITAITLMERHGVYEKDLDFVFFDVLGDVVCGGFAMPVRDGKAEEIYIVASGEMMALYAANNICKGMVKYARQSGVRLGGIICNSRNVDGEKELLEEFCERIGTQMIHFVPRDNIVQKAEFNKKSVIEFDPECNQSQEYRELARKIIENKDFVIPEPMTMDEMEELVVKYGVMD.

9–16 (GKGGIGKS) is an ATP binding site. C97 serves as a coordination point for [4Fe-4S] cluster. Position 100 is an ADP-ribosylarginine; by dinitrogenase reductase ADP-ribosyltransferase (R100). C132 serves as a coordination point for [4Fe-4S] cluster.

This sequence belongs to the NifH/BchL/ChlL family. Homodimer. It depends on [4Fe-4S] cluster as a cofactor. Post-translationally, the reversible ADP-ribosylation of Arg-100 inactivates the nitrogenase reductase and regulates nitrogenase activity.

It catalyses the reaction N2 + 8 reduced [2Fe-2S]-[ferredoxin] + 16 ATP + 16 H2O = H2 + 8 oxidized [2Fe-2S]-[ferredoxin] + 2 NH4(+) + 16 ADP + 16 phosphate + 6 H(+). Functionally, the key enzymatic reactions in nitrogen fixation are catalyzed by the nitrogenase complex, which has 2 components: the iron protein and the molybdenum-iron protein. This chain is Nitrogenase iron protein 1 (nifH1), found in Methanothermobacter thermautotrophicus (strain ATCC 29096 / DSM 1053 / JCM 10044 / NBRC 100330 / Delta H) (Methanobacterium thermoautotrophicum).